The following is a 626-amino-acid chain: Acetolactate synthase large subunit (626 aa).

Polar residues predominate over residues 1–13 (MNVAASQQPTPAT). Positions 1–23 (MNVAASQQPTPATVASRGRSAAP) are disordered. Glu73 contacts thiamine diphosphate. FAD contacts are provided by residues Arg175, 281-302 (HGTV…IGSR), and 324-343 (DIDP…IVGD). Residues 416–496 (QHQMWAAQFV…IKIALINNGN (81 aa)) are thiamine pyrophosphate binding. Mg(2+) contacts are provided by Asp467 and Asn494.

Belongs to the TPP enzyme family. Dimer of large and small chains. Mg(2+) serves as cofactor. The cofactor is thiamine diphosphate.

It catalyses the reaction 2 pyruvate + H(+) = (2S)-2-acetolactate + CO2. It functions in the pathway amino-acid biosynthesis; L-isoleucine biosynthesis; L-isoleucine from 2-oxobutanoate: step 1/4. The protein operates within amino-acid biosynthesis; L-valine biosynthesis; L-valine from pyruvate: step 1/4. In Corynebacterium glutamicum (strain ATCC 13032 / DSM 20300 / JCM 1318 / BCRC 11384 / CCUG 27702 / LMG 3730 / NBRC 12168 / NCIMB 10025 / NRRL B-2784 / 534), this protein is Acetolactate synthase large subunit (ilvB).